Consider the following 210-residue polypeptide: Ribosomal RNA large subunit methyltransferase E (210 aa).

Positions 60, 62, 85, 101, and 126 each coordinate S-adenosyl-L-methionine. K166 (proton acceptor) is an active-site residue.

Belongs to the class I-like SAM-binding methyltransferase superfamily. RNA methyltransferase RlmE family.

It localises to the cytoplasm. The catalysed reaction is uridine(2552) in 23S rRNA + S-adenosyl-L-methionine = 2'-O-methyluridine(2552) in 23S rRNA + S-adenosyl-L-homocysteine + H(+). Functionally, specifically methylates the uridine in position 2552 of 23S rRNA at the 2'-O position of the ribose in the fully assembled 50S ribosomal subunit. The polypeptide is Ribosomal RNA large subunit methyltransferase E (Bordetella pertussis (strain Tohama I / ATCC BAA-589 / NCTC 13251)).